Reading from the N-terminus, the 133-residue chain is Phosphoribosyl-AMP cyclohydrolase (133 aa).

Position 90 (aspartate 90) interacts with Mg(2+). Zn(2+) is bound at residue cysteine 91. Residues aspartate 92 and aspartate 94 each coordinate Mg(2+). Residues cysteine 107 and cysteine 114 each contribute to the Zn(2+) site.

The protein belongs to the PRA-CH family. Homodimer. The cofactor is Mg(2+). Zn(2+) is required as a cofactor.

The protein localises to the cytoplasm. It catalyses the reaction 1-(5-phospho-beta-D-ribosyl)-5'-AMP + H2O = 1-(5-phospho-beta-D-ribosyl)-5-[(5-phospho-beta-D-ribosylamino)methylideneamino]imidazole-4-carboxamide. Its pathway is amino-acid biosynthesis; L-histidine biosynthesis; L-histidine from 5-phospho-alpha-D-ribose 1-diphosphate: step 3/9. In terms of biological role, catalyzes the hydrolysis of the adenine ring of phosphoribosyl-AMP. This is Phosphoribosyl-AMP cyclohydrolase from Streptomyces avermitilis (strain ATCC 31267 / DSM 46492 / JCM 5070 / NBRC 14893 / NCIMB 12804 / NRRL 8165 / MA-4680).